Consider the following 361-residue polypeptide: Chorismate synthase (361 aa).

Arg48 and Arg54 together coordinate NADP(+). FMN contacts are provided by residues 125-127, 238-239, Gly278, 293-297, and Arg319; these read RSS, NA, and KPTSS.

Belongs to the chorismate synthase family. As to quaternary structure, homotetramer. Requires FMNH2 as cofactor.

The enzyme catalyses 5-O-(1-carboxyvinyl)-3-phosphoshikimate = chorismate + phosphate. It participates in metabolic intermediate biosynthesis; chorismate biosynthesis; chorismate from D-erythrose 4-phosphate and phosphoenolpyruvate: step 7/7. In terms of biological role, catalyzes the anti-1,4-elimination of the C-3 phosphate and the C-6 proR hydrogen from 5-enolpyruvylshikimate-3-phosphate (EPSP) to yield chorismate, which is the branch point compound that serves as the starting substrate for the three terminal pathways of aromatic amino acid biosynthesis. This reaction introduces a second double bond into the aromatic ring system. The polypeptide is Chorismate synthase (Salmonella arizonae (strain ATCC BAA-731 / CDC346-86 / RSK2980)).